The chain runs to 114 residues: Macrophage migration inhibitory factor homolog (114 aa).

The active-site Proton acceptor; via imino nitrogen is the proline 2. Substrate is bound by residues lysine 33 and asparagine 98.

The protein belongs to the MIF family.

Its subcellular location is the secreted. It catalyses the reaction L-dopachrome = 5,6-dihydroxyindole-2-carboxylate. The catalysed reaction is 3-phenylpyruvate = enol-phenylpyruvate. Tautomerization of the methyl ester of L-dopachrome. Inhibits migration of human peripheral blood mononuclear cells. The protein is Macrophage migration inhibitory factor homolog of Trichuris trichiura (Whipworm).